Reading from the N-terminus, the 92-residue chain is LYR motif-containing protein 4 homolog (92 aa).

The stretch at 48-68 (AEIDRQMAEGQQNLELIRRQV) forms a coiled coil.

The protein belongs to the complex I LYR family. As to quaternary structure, component of the mitochondrial core iron-sulfur cluster (ISC) assembly complex at least composed of the cysteine desulfurase Nfs1, the scaffold protein IscU, the accessory protein bcn92/Isd11/Lyrm4, and probably fh/frataxin. Interacts with Nfs1.

The protein resides in the mitochondrion. Stabilizing factor of the core iron-sulfur cluster (ISC) assembly complex that regulates the stability and cysteine desulfurase activity of Nfs1 and participates in the [2Fe-2S] clusters assembly on the scaffolding protein IscU. The sequence is that of LYR motif-containing protein 4 homolog from Drosophila melanogaster (Fruit fly).